A 375-amino-acid polypeptide reads, in one-letter code: MTIMSDIIAQRTILLIADFSSIIGCSLVLIGFWRLKLLRNHITKIISLFCATSLFKDVISTIITLLYKPDQTESGFPCYLHAIVITFGSLACWLWTLMLSFSIYNLIVRREPEPERFEKFYFCLCYGLPLISTIVMLSTHIIQPVGGWCWIGDNYDGYRFGLFYGPFFFIWGTSAILVGLTSKYTYSVIRSSVSDNKDKHMTYQFKLINYIVVFLVCWVFAIVNRILNGLNQFPTVPNVLHTYFSVSHGFYASITFIYNNPLMWRYFGAKFLLIFSKFGLFVQAQQRLELNKNNNNPSPIMRSKNALDNGADSSVVELPCLSKADSLSLDAENNIETPKENENQNHHHHHHHHHHHNHYNNNNNNNNINNKNDMI.

Residues 1–10 lie on the Extracellular side of the membrane; sequence MTIMSDIIAQ. A helical transmembrane segment spans residues 11 to 30; it reads RTILLIADFSSIIGCSLVLI. Topologically, residues 31–44 are cytoplasmic; it reads GFWRLKLLRNHITK. The helical transmembrane segment at 45–65 threads the bilayer; sequence IISLFCATSLFKDVISTIITL. The Extracellular segment spans residues 66–82; that stretch reads LYKPDQTESGFPCYLHA. The helical transmembrane segment at 83–108 threads the bilayer; sequence IVITFGSLACWLWTLMLSFSIYNLIV. The Cytoplasmic segment spans residues 109 to 119; the sequence is RREPEPERFEK. The helical transmembrane segment at 120-138 threads the bilayer; that stretch reads FYFCLCYGLPLISTIVMLS. At 139 to 161 the chain is on the extracellular side; it reads THIIQPVGGWCWIGDNYDGYRFG. The helical transmembrane segment at 162–180 threads the bilayer; sequence LFYGPFFFIWGTSAILVGL. Residues 181–204 are Cytoplasmic-facing; it reads TSKYTYSVIRSSVSDNKDKHMTYQ. Residue S192 is modified to Phosphoserine. A helical membrane pass occupies residues 205–223; the sequence is FKLINYIVVFLVCWVFAIV. The Extracellular segment spans residues 224–234; the sequence is NRILNGLNQFP. Residues 235 to 259 form a helical membrane-spanning segment; it reads TVPNVLHTYFSVSHGFYASITFIYN. Over 260 to 375 the chain is Cytoplasmic; it reads NPLMWRYFGA…NNINNKNDMI (116 aa). Phosphoserine occurs at positions 298 and 303. Residues 338-375 form a disordered region; that stretch reads PKENENQNHHHHHHHHHHHNHYNNNNNNNNINNKNDMI. Positions 346 to 358 are enriched in basic residues; it reads HHHHHHHHHHHNH. The segment covering 359-375 has biased composition (low complexity); it reads YNNNNNNNNINNKNDMI.

This sequence belongs to the G-protein coupled receptor 5 family. In terms of processing, C-terminal Ser or Thr residues may be phosphorylated.

It localises to the membrane. Its function is as follows. Receptor for cAMP. Coordinates the aggregation of individual cells into a multicellular organism and regulates the expression of a large number of developmentally regulated genes. The activity of this receptor is mediated by G proteins. Plays a key role during tip formation and late development; involved in cAMP-directed patterning of pre stalk cells as they sort before and during tip formation. The chain is Cyclic AMP receptor 2 (carB) from Dictyostelium discoideum (Social amoeba).